The primary structure comprises 480 residues: Protein disulfide-isomerase 5-4 (480 aa).

Asn-74 and Asn-99 each carry an N-linked (GlcNAc...) asparagine glycan. One can recognise a Thioredoxin domain in the interval 120–263; that stretch reads FHAGEVLSLI…LVKMVVSLVE (144 aa). Active-site nucleophile residues include Cys-170 and Cys-173. A disulfide bridge links Cys-170 with Cys-173. 3 N-linked (GlcNAc...) asparagine glycosylation sites follow: Asn-280, Asn-326, and Asn-376. Residues 439–459 traverse the membrane as a helical segment; that stretch reads FSHFITNVCAIIGGVFTVAGI.

Belongs to the protein disulfide isomerase family. As to expression, widely expressed.

The protein resides in the membrane. Acts as a protein-folding catalyst that interacts with nascent polypeptides to catalyze the formation, isomerization, and reduction or oxidation of disulfide bonds. This is Protein disulfide-isomerase 5-4 (PDIL5-4) from Arabidopsis thaliana (Mouse-ear cress).